A 243-amino-acid polypeptide reads, in one-letter code: Sugar fermentation stimulation protein homolog (243 aa).

This sequence belongs to the SfsA family.

The polypeptide is Sugar fermentation stimulation protein homolog (Bdellovibrio bacteriovorus (strain ATCC 15356 / DSM 50701 / NCIMB 9529 / HD100)).